We begin with the raw amino-acid sequence, 387 residues long: Alpha-2B adrenergic receptor (387 aa).

The chain crosses the membrane as a helical span at residues 1–25 (AIAAVITFLILFTIFGNALVILAVL). The Cytoplasmic portion of the chain corresponds to 26-36 (TSRSLRAPQNL). The helical transmembrane segment at 37–62 (FLVSLAAADILVATLIIPFSLANELL) threads the bilayer. Residues 63-72 (GYWYFRHTWC) are Extracellular-facing. A disulfide bridge links Cys-72 with Cys-151. The chain crosses the membrane as a helical span at residues 73–95 (XVYLALDVLFCTSSIVHLCAISL). The Cytoplasmic segment spans residues 96–117 (DRYWAVSRALEYNSKRTPRRIK). Residues 118 to 140 (CIILTVWLIAAAISLPPLIYKGD) traverse the membrane as a helical segment. Topologically, residues 141–156 (QDPQPRGRPQCKLNQE) are extracellular. A helical transmembrane segment spans residues 157-180 (AWYILSSSIGSFFVPCLIMILVYL). Over 181 to 351 (RIYLIAKRSS…LTREKRFTFV (171 aa)) the chain is Cytoplasmic. Residues 193–303 (RKPRAKGXPR…VPASPALACS (111 aa)) are disordered. Residues 279–290 (PEEEAEEEEECG) are compositionally biased toward acidic residues. A helical membrane pass occupies residues 352 to 375 (LAVVIGVFVLCWFPFFFSYSLGAI). Topologically, residues 376 to 384 (CPQHCKVPH) are extracellular. A helical membrane pass occupies residues 385 to 387 (GLF).

This sequence belongs to the G-protein coupled receptor 1 family. Adrenergic receptor subfamily. ADRA2B sub-subfamily. As to quaternary structure, interacts with RAB26. Interacts with PPP1R9B. Interacts with GGA1, GGA2 and GGA3.

It localises to the cell membrane. Its function is as follows. Alpha-2 adrenergic receptors mediate the catecholamine-induced inhibition of adenylate cyclase through the action of G proteins. The protein is Alpha-2B adrenergic receptor (ADRA2B) of Macroscelides proboscideus (Short-eared elephant shrew).